The primary structure comprises 251 residues: 14-3-3-like protein (251 aa).

Belongs to the 14-3-3 family. As to expression, most abundant in roots and flowers.

In Nicotiana tabacum (Common tobacco), this protein is 14-3-3-like protein.